Here is a 516-residue protein sequence, read N- to C-terminus: Keratin, type II cuticular Hb2 (516 aa).

The tract at residues 1 to 118 is head; the sequence is MSCRNFQLSP…PTVQRVKRDE (118 aa). The IF rod domain maps to 118 to 429; the sequence is EKEQIKCLNN…RLLEGEEHRL (312 aa). A coil 1A region spans residues 119 to 153; sequence KEQIKCLNNRFASFINKVRFLEQKNKLLETKWNFM. Positions 154 to 163 are linker 1; sequence QQQRSCQSNM. The tract at residues 164–264 is coil 1B; sequence EPLFEGYICA…FEEEIGLLQS (101 aa). Residues 265–281 are linker 12; that stretch reads QISETSVIVKMDNSREL. The tract at residues 282–425 is coil 2; sequence DVDGIVAEIK…ATYRRLLEGE (144 aa). Residues 426–516 are tail; that stretch reads EHRLCEGIGP…VGVGSNSCSR (91 aa).

It belongs to the intermediate filament family. Heterotetramer of two type I and two type II keratins.

This Mus musculus (Mouse) protein is Keratin, type II cuticular Hb2 (Krt82).